The chain runs to 248 residues: Probable transcriptional regulatory protein SO_2432 (248 aa).

It belongs to the TACO1 family.

Its subcellular location is the cytoplasm. The sequence is that of Probable transcriptional regulatory protein SO_2432 from Shewanella oneidensis (strain ATCC 700550 / JCM 31522 / CIP 106686 / LMG 19005 / NCIMB 14063 / MR-1).